The following is a 396-amino-acid chain: Elongation factor Tu (396 aa).

Residues 10-205 (KPHVNIGTIG…ACDESIPDPE (196 aa)) form the tr-type G domain. Positions 19–26 (GHVDHGKT) are G1. 19–26 (GHVDHGKT) is a GTP binding site. Thr26 is a Mg(2+) binding site. Residues 62–66 (GITIN) form a G2 region. The segment at 83-86 (DAPG) is G3. GTP-binding positions include 83-87 (DAPGH) and 138-141 (NKCD). A G4 region spans residues 138-141 (NKCD). The tract at residues 175-177 (SAL) is G5.

The protein belongs to the TRAFAC class translation factor GTPase superfamily. Classic translation factor GTPase family. EF-Tu/EF-1A subfamily. In terms of assembly, monomer.

The protein localises to the cytoplasm. It catalyses the reaction GTP + H2O = GDP + phosphate + H(+). Functionally, GTP hydrolase that promotes the GTP-dependent binding of aminoacyl-tRNA to the A-site of ribosomes during protein biosynthesis. This is Elongation factor Tu from Corynebacterium jeikeium (strain K411).